A 175-amino-acid chain; its full sequence is MLCPICQDTNSRVLESRSAESGKSIRRRRECMNCQHRFTTYERIEFLTITIIKRDGKKESFDKSKLLRGIIRSCEKTGIEVSQLEAFVNQIEVELQGKCQREITSAEIGEIVLSKLSGISEVAYIRFASVYRKFQGIRDFVDTLNHLQNQKENLEFTATVPQNSEISLQQDVINV.

A zinc finger spans residues 3–34 (CPICQDTNSRVLESRSAESGKSIRRRRECMNC). Residues 49–139 (ITIIKRDGKK…VYRKFQGIRD (91 aa)) form the ATP-cone domain.

This sequence belongs to the NrdR family. Requires Zn(2+) as cofactor.

Functionally, negatively regulates transcription of bacterial ribonucleotide reductase nrd genes and operons by binding to NrdR-boxes. The protein is Transcriptional repressor NrdR of Trichodesmium erythraeum (strain IMS101).